The chain runs to 269 residues: Putative esterase/lipase 1 (269 aa).

His27 is an active-site residue. The Charge relay system role is filled by Ser94.

The protein belongs to the lipase/esterase LIP3/BchO family.

The sequence is that of Putative esterase/lipase 1 from Mycoplasma pneumoniae (strain ATCC 29342 / M129 / Subtype 1) (Mycoplasmoides pneumoniae).